Consider the following 86-residue polypeptide: UPF0147 protein PYRAB16980 (86 aa).

The protein belongs to the UPF0147 family.

The chain is UPF0147 protein PYRAB16980 from Pyrococcus abyssi (strain GE5 / Orsay).